The following is a 1026-amino-acid chain: MRFFALFIYRPVATILIAAAITLCGILGFRLLPVAPLPQVDFPVIMVSASLPGASPETMASSVATPLERSLGRIAGVNEMTSSSSLGSTRIILEFNFDRDINGAARDVQAAINAAQSLLPGGMPSRPTYRKANPSDAPIMILTLTSESWSQGKLYDFASTQLAQTIAQIDGVGDVDVGGSSLPAVRVGLNPQALFNQGVSLDEVREAIDSANVRRPQGAIEDSVHRWQIQTNDELKTAAEYQPLIIHYNNGAAVRLGDVASVTDSVQDVRNAGMTNAKPAILLMIRKLPEANIIQTVDGIRAKLPELRAMIPAAIDLQIAQDRSPTIRASLQEVEETLAISVALVILVVFLFLRSGRATLIPAVAVPVSLIGTFAAMYLCGFSLNNLSLMALTIATGFVVDDAIVVLENIARHLEAGMKPLQAALQGTREVGFTVISMSLSLVAVFLPLLLMGGLPGRLLREFAVTLSVAIGISLVVSLTLTPMMCGWMLKSSKPRTQQRKRGVGRLLVALQQGYGTSLKWVLNHTRLVGVVFLGTVALNIWLYIAIPKTFFPEQDTGVLMGGIQADQSISFQAMRGKLQDFMKIIRDDPAVNNVTGFTGGSRVNSGMMFITLKPRGERKETAQQVIDRLRVKLAKEPGARLFLMAVQDIRVGGRQANASYQYTLLSDSLAALREWEPKIRKALSALPQLADVNSDQQDNGAEMNLIYDRDTMSRLGIDVQAANSLLNNAFGQRQISTIYQPMNQYKVVMEVDPRYTQDISALEKMFVINRDGKAIPLSYFAQWRPANAPLSVNHQGLSAASTIAFNLPTGTSLSQATEAINRTMTQLGVPPTVRGSFSGTAQVFQQTMNSQLILIVAAIATVYIVLGILYESYVHPLTILSTLPSAGVGALLALELFNAPFSLIALIGIMLLIGIVKKNAIMMVDFALEAQRSGGLTPEQAIFQACLLRFRPIMMTTLAALFGALPLVLSDGDGSELRQPLGITIVGGLVMSQLLTLYTTPVVYLFFDRLRLRFSRKNSKPVVEI.

Transmembrane regions (helical) follow at residues 15-35 (ILIAAAITLCGILGFRLLPVA), 333-353 (EVEETLAISVALVILVVFLFL), 360-380 (LIPAVAVPVSLIGTFAAMYLC), 387-407 (LSLMALTIATGFVVDDAIVVL), 431-451 (VGFTVISMSLSLVAVFLPLLL), 463-483 (FAVTLSVAIGISLVVSLTLTP), 528-548 (LVGVVFLGTVALNIWLYIAIP), 853-873 (LILIVAAIATVYIVLGILYES), 897-917 (LFNAPFSLIALIGIMLLIGIV), 953-973 (PIMMTTLAALFGALPLVLSDG), and 984-1004 (ITIVGGLVMSQLLTLYTTPVV).

Belongs to the resistance-nodulation-cell division (RND) (TC 2.A.6) family. MdtC subfamily. In terms of assembly, part of a tripartite efflux system composed of MdtA, MdtB and MdtC. MdtC forms a heteromultimer with MdtB.

Its subcellular location is the cell inner membrane. The chain is Multidrug resistance protein MdtC from Salmonella paratyphi B (strain ATCC BAA-1250 / SPB7).